The following is a 399-amino-acid chain: Succinyl-diaminopimelate desuccinylase (399 aa).

Residue H80 participates in Zn(2+) binding. The active site involves D82. D113 provides a ligand contact to Zn(2+). The active-site Proton acceptor is the E147. The Zn(2+) site is built by E148, E176, and H366.

Belongs to the peptidase M20A family. DapE subfamily. In terms of assembly, homodimer. The cofactor is Zn(2+). Requires Co(2+) as cofactor.

It catalyses the reaction N-succinyl-(2S,6S)-2,6-diaminopimelate + H2O = (2S,6S)-2,6-diaminopimelate + succinate. It participates in amino-acid biosynthesis; L-lysine biosynthesis via DAP pathway; LL-2,6-diaminopimelate from (S)-tetrahydrodipicolinate (succinylase route): step 3/3. In terms of biological role, catalyzes the hydrolysis of N-succinyl-L,L-diaminopimelic acid (SDAP), forming succinate and LL-2,6-diaminopimelate (DAP), an intermediate involved in the bacterial biosynthesis of lysine and meso-diaminopimelic acid, an essential component of bacterial cell walls. This chain is Succinyl-diaminopimelate desuccinylase, found in Colwellia psychrerythraea (strain 34H / ATCC BAA-681) (Vibrio psychroerythus).